The sequence spans 246 residues: 4-hydroxy-tetrahydrodipicolinate reductase (246 aa).

Residues 8-13 (GISGRM), 75-77 (GTT), and 99-102 (ASNY) contribute to the NAD(+) site. The active-site Proton donor/acceptor is histidine 132. Residue histidine 133 participates in (S)-2,3,4,5-tetrahydrodipicolinate binding. The active-site Proton donor is lysine 136. (S)-2,3,4,5-tetrahydrodipicolinate is bound at residue 142–143 (GT).

This sequence belongs to the DapB family.

It is found in the cytoplasm. The catalysed reaction is (S)-2,3,4,5-tetrahydrodipicolinate + NAD(+) + H2O = (2S,4S)-4-hydroxy-2,3,4,5-tetrahydrodipicolinate + NADH + H(+). The enzyme catalyses (S)-2,3,4,5-tetrahydrodipicolinate + NADP(+) + H2O = (2S,4S)-4-hydroxy-2,3,4,5-tetrahydrodipicolinate + NADPH + H(+). The protein operates within amino-acid biosynthesis; L-lysine biosynthesis via DAP pathway; (S)-tetrahydrodipicolinate from L-aspartate: step 4/4. Catalyzes the conversion of 4-hydroxy-tetrahydrodipicolinate (HTPA) to tetrahydrodipicolinate. The polypeptide is 4-hydroxy-tetrahydrodipicolinate reductase (Akkermansia muciniphila (strain ATCC BAA-835 / DSM 22959 / JCM 33894 / BCRC 81048 / CCUG 64013 / CIP 107961 / Muc)).